The primary structure comprises 242 residues: 1-(5-phosphoribosyl)-5-[(5-phosphoribosylamino)methylideneamino] imidazole-4-carboxamide isomerase (242 aa).

Catalysis depends on Asp-8, which acts as the Proton acceptor. Asp-129 functions as the Proton donor in the catalytic mechanism.

This sequence belongs to the HisA/HisF family.

Its subcellular location is the cytoplasm. It catalyses the reaction 1-(5-phospho-beta-D-ribosyl)-5-[(5-phospho-beta-D-ribosylamino)methylideneamino]imidazole-4-carboxamide = 5-[(5-phospho-1-deoxy-D-ribulos-1-ylimino)methylamino]-1-(5-phospho-beta-D-ribosyl)imidazole-4-carboxamide. It participates in amino-acid biosynthesis; L-histidine biosynthesis; L-histidine from 5-phospho-alpha-D-ribose 1-diphosphate: step 4/9. This is 1-(5-phosphoribosyl)-5-[(5-phosphoribosylamino)methylideneamino] imidazole-4-carboxamide isomerase from Erythrobacter litoralis (strain HTCC2594).